Consider the following 467-residue polypeptide: tRNA-2-methylthio-N(6)-dimethylallyladenosine synthase (467 aa).

The segment at 1 to 20 (MSDDTTQIEPAMAQETSPRA) is disordered. Residues 23–143 (RKVFVKTYGC…LPNALARVRG (121 aa)) enclose the MTTase N-terminal domain. [4Fe-4S] cluster-binding residues include Cys-32, Cys-68, Cys-106, Cys-184, Cys-188, and Cys-191. One can recognise a Radical SAM core domain in the interval 170–402 (RKRGVSAFLT…QALLSAQQYA (233 aa)). Residues 405–467 (DSMIGRKMDV…TNSLIAQKLA (63 aa)) form the TRAM domain.

The protein belongs to the methylthiotransferase family. MiaB subfamily. In terms of assembly, monomer. It depends on [4Fe-4S] cluster as a cofactor.

Its subcellular location is the cytoplasm. It carries out the reaction N(6)-dimethylallyladenosine(37) in tRNA + (sulfur carrier)-SH + AH2 + 2 S-adenosyl-L-methionine = 2-methylsulfanyl-N(6)-dimethylallyladenosine(37) in tRNA + (sulfur carrier)-H + 5'-deoxyadenosine + L-methionine + A + S-adenosyl-L-homocysteine + 2 H(+). Functionally, catalyzes the methylthiolation of N6-(dimethylallyl)adenosine (i(6)A), leading to the formation of 2-methylthio-N6-(dimethylallyl)adenosine (ms(2)i(6)A) at position 37 in tRNAs that read codons beginning with uridine. This Brucella melitensis biotype 1 (strain ATCC 23456 / CCUG 17765 / NCTC 10094 / 16M) protein is tRNA-2-methylthio-N(6)-dimethylallyladenosine synthase.